Consider the following 438-residue polypeptide: ATP-dependent RNA helicase RhlB (438 aa).

The short motif at 9–37 is the Q motif element; the sequence is QRFADLPLHPEVKQALAENGFEFCTPIQA. One can recognise a Helicase ATP-binding domain in the interval 40 to 219; it reads LPVLLQSKDI…YDHMNEPVKV (180 aa). 53 to 60 lines the ATP pocket; that stretch reads AQTGTGKT. The short motif at 165–168 is the DEAD box element; the sequence is DEAD. A Helicase C-terminal domain is found at 243–390; the sequence is KMRLLLTLIE…VSNYDSEALL (148 aa). The disordered stretch occupies residues 395-438; it reads TPAKIHRKHPSGTRNLRDRSGTSRPGAQRSGARPPRHDRTRRHS. Over residues 428–438 the composition is skewed to basic residues; the sequence is PPRHDRTRRHS.

This sequence belongs to the DEAD box helicase family. RhlB subfamily. Component of the RNA degradosome, which is a multiprotein complex involved in RNA processing and mRNA degradation.

The protein resides in the cytoplasm. It catalyses the reaction ATP + H2O = ADP + phosphate + H(+). DEAD-box RNA helicase involved in RNA degradation. Has RNA-dependent ATPase activity and unwinds double-stranded RNA. The polypeptide is ATP-dependent RNA helicase RhlB (Shewanella baltica (strain OS223)).